The sequence spans 81 residues: Putative membrane protein insertion efficiency factor (81 aa).

Belongs to the UPF0161 family.

It is found in the cell inner membrane. In terms of biological role, could be involved in insertion of integral membrane proteins into the membrane. The sequence is that of Putative membrane protein insertion efficiency factor from Thermotoga maritima (strain ATCC 43589 / DSM 3109 / JCM 10099 / NBRC 100826 / MSB8).